The primary structure comprises 660 residues: uncharacterized protein (660 aa).

The disordered stretch occupies residues 1-660; it reads MGTPCQSARG…RNPGCPRTWR (660 aa). Residues 67–80 show a composition bias toward gly residues; the sequence is RPGGGNRVGAGRGR. Positions 104 to 116 are enriched in polar residues; the sequence is SNPTGGCSDPQRS. Tandem repeats lie at residues 149–273, 274–398, 399–523, and 524–648. Residues 149-648 are 4 X 125 AA tandem repeats; the sequence is SARNPGCPRT…THRRPPGCPR (500 aa). Low complexity-rich tracts occupy residues 177 to 196, 302 to 321, 427 to 446, and 552 to 571; these read RPSG…GTPA.

This is an uncharacterized protein from Homo sapiens (Human).